We begin with the raw amino-acid sequence, 614 residues long: Zinc finger and SCAN domain-containing protein 2 (614 aa).

Disordered regions lie at residues 1-26 (MMAA…EDRQ) and 43-76 (EAVL…PQGA). The 74-residue stretch at 59-132 (SAGKGGPQEE…ALVEDLTQTL (74 aa)) folds into the SCAN box domain. 14 C2H2-type zinc fingers span residues 222-244 (YECP…ERTH), 250-272 (YKCD…QTTH), 278-300 (YKCR…QRIH), 306-328 (FQCA…QRTH), 334-356 (YSCP…QGIH), 362-384 (YECK…QRIH), 390-412 (YKCT…RRTH), 418-440 (YQCS…RRTH), 446-468 (YKCG…QGMH), 474-496 (YECL…QRIH), 502-524 (YKCS…QRTH), 530-552 (YKCL…QRAH), 558-580 (YRCP…QRIH), and 586-608 (YKCP…QRTH).

This sequence belongs to the krueppel C2H2-type zinc-finger protein family.

It is found in the nucleus. May be involved in transcriptional regulation during the post-meiotic stages of spermatogenesis. This is Zinc finger and SCAN domain-containing protein 2 (ZSCAN2) from Homo sapiens (Human).